We begin with the raw amino-acid sequence, 654 residues long: Acetyl-coenzyme A synthetase (654 aa).

Residues 190-193 (RGGK) and Thr313 each bind CoA. ATP contacts are provided by residues 389–391 (GEP), 413–418 (DTWWQT), Asp504, and Arg519. Ser527 serves as a coordination point for CoA. Arg530 lines the ATP pocket. Residues Val541 and Val546 each coordinate Mg(2+). Residue Lys613 is modified to N6-acetyllysine.

This sequence belongs to the ATP-dependent AMP-binding enzyme family. Mg(2+) serves as cofactor. In terms of processing, acetylated. Deacetylation by the SIR2-homolog deacetylase activates the enzyme.

The catalysed reaction is acetate + ATP + CoA = acetyl-CoA + AMP + diphosphate. In terms of biological role, catalyzes the conversion of acetate into acetyl-CoA (AcCoA), an essential intermediate at the junction of anabolic and catabolic pathways. AcsA undergoes a two-step reaction. In the first half reaction, AcsA combines acetate with ATP to form acetyl-adenylate (AcAMP) intermediate. In the second half reaction, it can then transfer the acetyl group from AcAMP to the sulfhydryl group of CoA, forming the product AcCoA. The protein is Acetyl-coenzyme A synthetase of Leptospira borgpetersenii serovar Hardjo-bovis (strain L550).